The chain runs to 202 residues: Imidazoleglycerol-phosphate dehydratase (202 aa).

This sequence belongs to the imidazoleglycerol-phosphate dehydratase family.

The protein localises to the cytoplasm. It catalyses the reaction D-erythro-1-(imidazol-4-yl)glycerol 3-phosphate = 3-(imidazol-4-yl)-2-oxopropyl phosphate + H2O. The protein operates within amino-acid biosynthesis; L-histidine biosynthesis; L-histidine from 5-phospho-alpha-D-ribose 1-diphosphate: step 6/9. This chain is Imidazoleglycerol-phosphate dehydratase, found in Synechococcus sp. (strain CC9605).